A 418-amino-acid polypeptide reads, in one-letter code: MRTKAAGCAERRPLQPRTEAAAAPAGRAMPSEYTYVKLRSDCSRPSLQWYTRAQSKMRRPSLLLKDILKCTLLVFGVWILYILKLNYTTEECDMKKMHYVDPDHVKRAQKYAQQVLQKECRPKFAKTSMALLFEHRYSVDLLPFVQKAPKDSEAESKYDPPFGFRKFSSKVQTLLELLPEHDLPEHLKAKTCRRCVVIGSGGILHGLELGHTLNQFDVVIRLNSAPVEGYSEHVGNKTTIRMTYPEGAPLSDLEYYSNDLFVAVLFKSVDFNWLQAMVKKETLPFWVRLFFWKQVAEKIPLQPKHFRILNPVIIKETAFDILQYSEPQSRFWGRDKNVPTIGVIAVVLATHLCDEVSLAGFGYDLNQPRTPLHYFDSQCMAAMNFQTMHNVTTETKFLLKLVKEGVVKDLSGGIDREF.

The interval 1-25 (MRTKAAGCAERRPLQPRTEAAAAPA) is disordered. The Cytoplasmic segment spans residues 1 to 61 (MRTKAAGCAE…RAQSKMRRPS (61 aa)). The chain crosses the membrane as a helical; Signal-anchor for type II membrane protein span at residues 62-82 (LLLKDILKCTLLVFGVWILYI). The Lumenal portion of the chain corresponds to 83 to 418 (LKLNYTTEEC…DLSGGIDREF (336 aa)). Asn86, Asn236, and Asn390 each carry an N-linked (GlcNAc...) asparagine glycan. Cys195 and Cys353 form a disulfide bridge.

It belongs to the glycosyltransferase 29 family. N-glycosylated. As to expression, ubiquitous. High expression in brain, skeletal muscle, placenta, and testis. mRNA widely distributed in human brain, but slightly elevated expression was observed in the cerebral cortex, temporal lobe, and putamen.

Its subcellular location is the golgi apparatus membrane. It catalyses the reaction a beta-D-Gal-(1-&gt;4)-beta-D-Glc-(1&lt;-&gt;1)-Cer(d18:1(4E)) + CMP-N-acetyl-beta-neuraminate = a ganglioside GM3 (d18:1(4E)) + CMP + H(+). It carries out the reaction ganglioside GA2 (d18:1(4E)/18:0) + CMP-N-acetyl-beta-neuraminate = ganglioside GM2 (d18:1(4E)/18:0) + CMP + H(+). The enzyme catalyses a beta-D-Gal-(1&lt;-&gt;1')-ceramide + CMP-N-acetyl-beta-neuraminate = N-acetyl-alpha-neuraminosyl-(2-&gt;3)-beta-D-galactosyl-(1&lt;-&gt;1')-ceramide + CMP + H(+). The catalysed reaction is a beta-D-galactosyl-(1&lt;-&gt;1')-N-acylsphing-4-enine + CMP-N-acetyl-beta-neuraminate = a ganglioside GM4 (d18:1(4E)) + CMP + H(+). It catalyses the reaction ganglioside GA1 (d18:1(4E)/18:0) + CMP-N-acetyl-beta-neuraminate = ganglioside GM1 (d18:1(4E)/18:0) + CMP + H(+). Its pathway is glycolipid biosynthesis. In terms of biological role, transfers the sialyl group (N-acetyl-alpha-neuraminyl or NeuAc) from CMP-NeuAc to the non-reducing terminal galactose (Gal) of glycosphingolipids forming gangliosides (important molecules involved in the regulation of multiple cellular processes, including cell proliferation and differentiation, apoptosis, embryogenesis, development, and oncogenesis). Mainly involved in the biosynthesis of ganglioside GM3 but can also use different glycolipids as substrate acceptors such as D-galactosylceramide (GalCer), asialo-GM2 (GA2) and asialo-GM1 (GA1), although less preferentially than beta-D-Gal-(1-&gt;4)-beta-D-Glc-(1&lt;-&gt;1)-Cer (LacCer). In Homo sapiens (Human), this protein is Lactosylceramide alpha-2,3-sialyltransferase (ST3GAL5).